A 723-amino-acid chain; its full sequence is MSSRALRRLQDDNALLESLLSNSNANKMTSGKSTAGNIQKRENIFSMMNNVRDSDNSTDEGQMSEQDEEAAAAGERDTQSNGQPKRITLASKSSRRKKNKKAKRKQKNHTAEAAKDKGSDDDDDDEEFDKIIQQFKKTDILKYGKTKNDDTNEEGFFTASEPEEASSQPWKSFLSLESDPGFTKFPISCLRHSCKFFQNDFKKLDPHTEFKLLFDDISPESLEDIDSMTSTPVSPQQLKQIQRLKRLIRNWGGKDHRLAPNGPGMHPQHLKFTKIRDDWIPTQRGELSMKLLSSDDLLDWQLWERPLDWKDVIQNDVSQWQKFISFYKFEPLNSDLSKKSMMDFYLSVIVHPDHEALINLISSKFPYHVPGLLQVALIFIRQGDRSNTNGLLQRALFVFDRALKANIIFDSLNCQLPYIYFFNRQFYLAIFRYIQSLAQRGVIGTASEWTKVLWSLSPLEDPLGCRYFLDHYFLLNNDYQYIIELSNSPLMNCYKQWNTLGFSLAVVLSFLRINEMSSARNALLKAFKHHPLQLSELFKEKLLGDHALTKDLSIDGHSAENLELKAYMARFPLLWNRNEEVTFLHDEMSSILQDYHRGNVTIDSNDGQDHNNINNLQSPFFIAGIPINLLRFAILSEESSVMAAIPSFIWSDNEVYEFDVLPPMPTSKESIEVVENIKTFINEKDLAVLQAERMQDEDLLNQIRQISLQQYIHENEESNENEG.

The tract at residues 21-125 (SNSNANKMTS…DKGSDDDDDD (105 aa)) is disordered. Residues 27–37 (KMTSGKSTAGN) are compositionally biased toward polar residues. Basic residues predominate over residues 93-108 (SSRRKKNKKAKRKQKN). Residues 109 to 118 (HTAEAAKDKG) are compositionally biased toward basic and acidic residues. Ser119 bears the Phosphoserine mark. Thr158 carries the post-translational modification Phosphothreonine. Position 160 is a phosphoserine (Ser160).

The protein belongs to the TCF25 family. Component of the ribosome quality control complex (RQC), composed of the E3 ubiquitin ligase RKR1/LTN1, RQC1 and RQC2, as well as CDC48 and its ubiquitin-binding cofactors. RQC forms a stable complex with 60S ribosomal subunits.

Its subcellular location is the cytoplasm. Component of the ribosome quality control complex (RQC), a ribosome-associated complex that mediates ubiquitination and extraction of incompletely synthesized nascent chains for proteasomal degradation. Within the RQC complex, RQC1 is essential for the recruitment of CDC48 to incompletely synthesized nascent polypeptides that are ubiquitinated by RKR1/LTN1. The protein is Ribosome quality control complex subunit 1 of Saccharomyces cerevisiae (strain ATCC 204508 / S288c) (Baker's yeast).